The primary structure comprises 21 residues: Paulistine (21 aa).

Cysteine 7 and cysteine 14 are disulfide-bonded. The residue at position 21 (threonine 21) is a Threonine amide.

This sequence belongs to the sylv/frat/paul family. Occurs in oxidized and reduced states which are thought to adopt a compact globular and linear structure, respectively.

In terms of biological role, induces transient hyperalgesia and paw edema in mice. Probably exerts its effects via different pathways in an oxidation state-dependent way. The chain is Paulistine from Polybia paulista (Neotropical social wasp).